The sequence spans 249 residues: Pyridoxine 5'-phosphate synthase (249 aa).

N7 contacts 3-amino-2-oxopropyl phosphate. 9-10 (DH) lines the 1-deoxy-D-xylulose 5-phosphate pocket. R18 is a 3-amino-2-oxopropyl phosphate binding site. H43 functions as the Proton acceptor in the catalytic mechanism. 1-deoxy-D-xylulose 5-phosphate contacts are provided by R45 and H50. The active-site Proton acceptor is E70. T100 lines the 1-deoxy-D-xylulose 5-phosphate pocket. H190 serves as the catalytic Proton donor. 3-amino-2-oxopropyl phosphate is bound by residues G191 and 212–213 (GH).

Belongs to the PNP synthase family. Homooctamer; tetramer of dimers.

The protein resides in the cytoplasm. It catalyses the reaction 3-amino-2-oxopropyl phosphate + 1-deoxy-D-xylulose 5-phosphate = pyridoxine 5'-phosphate + phosphate + 2 H2O + H(+). Its pathway is cofactor biosynthesis; pyridoxine 5'-phosphate biosynthesis; pyridoxine 5'-phosphate from D-erythrose 4-phosphate: step 5/5. Its function is as follows. Catalyzes the complicated ring closure reaction between the two acyclic compounds 1-deoxy-D-xylulose-5-phosphate (DXP) and 3-amino-2-oxopropyl phosphate (1-amino-acetone-3-phosphate or AAP) to form pyridoxine 5'-phosphate (PNP) and inorganic phosphate. This is Pyridoxine 5'-phosphate synthase from Synechococcus sp. (strain CC9605).